We begin with the raw amino-acid sequence, 173 residues long: NADH-ubiquinone oxidoreductase chain 6 (173 aa).

Helical transmembrane passes span 24–44, 47–67, 81–101, and 142–162; these read AMGLMLLIQTFLTSLLTGMFV, FWFSYVLFLIFMGGMLVLFIY, MKLFFLSLSMILMFIVFSFFF, and LITLLLINYLFLTLLVTVKIT.

Belongs to the complex I subunit 6 family.

It is found in the mitochondrion membrane. The enzyme catalyses a ubiquinone + NADH + 5 H(+)(in) = a ubiquinol + NAD(+) + 4 H(+)(out). Its function is as follows. Core subunit of the mitochondrial membrane respiratory chain NADH dehydrogenase (Complex I) that is believed to belong to the minimal assembly required for catalysis. Complex I functions in the transfer of electrons from NADH to the respiratory chain. The immediate electron acceptor for the enzyme is believed to be ubiquinone. This is NADH-ubiquinone oxidoreductase chain 6 from Aedes aegypti (Yellowfever mosquito).